Here is a 99-residue protein sequence, read N- to C-terminus: MARITVEDCLEVVNNRFELVMMASKRARQLANGVQATLDNSETEDKPTVLALREIAARKIDNALIDEVEKAERERAEREALEWAAAEVVADEDMSKNDD.

Belongs to the RNA polymerase subunit omega family. The RNAP catalytic core consists of 2 alpha, 1 beta, 1 beta' and 1 omega subunit. When a sigma factor is associated with the core the holoenzyme is formed, which can initiate transcription.

The enzyme catalyses RNA(n) + a ribonucleoside 5'-triphosphate = RNA(n+1) + diphosphate. Its function is as follows. Promotes RNA polymerase assembly. Latches the N- and C-terminal regions of the beta' subunit thereby facilitating its interaction with the beta and alpha subunits. This chain is DNA-directed RNA polymerase subunit omega, found in Stenotrophomonas maltophilia (strain K279a).